Here is a 582-residue protein sequence, read N- to C-terminus: Regulatory solute carrier protein family 1 member 1 (582 aa).

8 disordered regions span residues 1–32 (MSSL…ARSV), 56–76 (KASA…LQVL), 143–180 (EKSW…VPQD), 303–325 (VDMS…HGQP), 363–384 (VTCQ…SGRR), 390–409 (LTPS…SESG), 426–452 (ASTS…ESAR), and 483–529 (SEGA…LSTP). Residues 16-32 (SGQSPEVGSPTSLARSV) are compositionally biased toward polar residues. Residues 148 to 179 (PENQTPSPVNGLQQHRETGSVQREAGQQSVPQ) are compositionally biased toward polar residues. Over residues 390-408 (LTPSDQYSQGSCHQATSES) the composition is skewed to polar residues. Basic and acidic residues-rich tracts occupy residues 438–452 (SPDR…ESAR) and 490–503 (PSEH…DRPE). Residues 536–576 (IFPAADVDRILGAGFTLQEALGALHRVGGNADLALLVLLAK) enclose the UBA domain.

Interacts with YRDC. Expressed in epithelial and subepithelial cells of small intestine.

It is found in the cell membrane. The protein resides in the nucleus. The protein localises to the golgi apparatus. Its subcellular location is the trans-Golgi network. Its function is as follows. Mediates transcriptional and post-transcriptional regulation of SLC5A1. Inhibits a dynamin and PKC-dependent exocytotic pathway of SLC5A1. Also involved in transcriptional regulation of SLC22A2. Exhibits glucose-dependent, short-term inhibition of SLC5A1 and SLC22A2 by inhibiting the release of vesicles from the trans-Golgi network. Regulates the expression of SLC5A1 in a tissue-specific manner and is specifically involved in its regulation in the small intestine. The polypeptide is Regulatory solute carrier protein family 1 member 1 (Rsc1a1) (Mus musculus (Mouse)).